A 147-amino-acid polypeptide reads, in one-letter code: Large ribosomal subunit protein uL13 (147 aa).

The interval 126–147 is disordered; that stretch reads AGPTHPHQAQQPVPYEIKQVAQ.

Belongs to the universal ribosomal protein uL13 family. As to quaternary structure, part of the 50S ribosomal subunit.

Functionally, this protein is one of the early assembly proteins of the 50S ribosomal subunit, although it is not seen to bind rRNA by itself. It is important during the early stages of 50S assembly. The protein is Large ribosomal subunit protein uL13 of Parafrankia sp. (strain EAN1pec).